The following is a 389-amino-acid chain: Probable acyl-CoA dehydrogenase fadE25 (389 aa).

The protein belongs to the acyl-CoA dehydrogenase family. FAD is required as a cofactor.

The catalysed reaction is a 2,3-saturated acyl-CoA + A = a 2,3-dehydroacyl-CoA + AH2. The sequence is that of Probable acyl-CoA dehydrogenase fadE25 (fadE25) from Mycobacterium bovis (strain ATCC BAA-935 / AF2122/97).